Reading from the N-terminus, the 694-residue chain is Elongation factor G (694 aa).

The tr-type G domain occupies 8-287 (EDYRNFGIMA…AVVEFLPAPT (280 aa)). GTP-binding positions include 17-24 (AHIDAGKT), 86-90 (DTPGH), and 140-143 (NKMD).

The protein belongs to the TRAFAC class translation factor GTPase superfamily. Classic translation factor GTPase family. EF-G/EF-2 subfamily.

It is found in the cytoplasm. Its function is as follows. Catalyzes the GTP-dependent ribosomal translocation step during translation elongation. During this step, the ribosome changes from the pre-translocational (PRE) to the post-translocational (POST) state as the newly formed A-site-bound peptidyl-tRNA and P-site-bound deacylated tRNA move to the P and E sites, respectively. Catalyzes the coordinated movement of the two tRNA molecules, the mRNA and conformational changes in the ribosome. This is Elongation factor G from Brucella melitensis biotype 2 (strain ATCC 23457).